We begin with the raw amino-acid sequence, 295 residues long: Manganese transport system membrane protein MntD (295 aa).

The next 9 helical transmembrane spans lie at 7-27 (IIAT…FLVL), 42-62 (LLGI…YMFI), 63-83 (GAAA…SKGV), 87-107 (AAIG…LSVY), 138-158 (IGPK…VLIS), 174-194 (ALAL…MLSL), 203-223 (VGAV…HLLT), 227-247 (LYML…GYFF), and 253-273 (VSIS…AFLF).

It belongs to the ABC-3 integral membrane protein family. In terms of assembly, the complex is probably composed of two ATP-binding proteins (MntB), two transmembrane proteins (MntC and MntD) and a solute-binding protein (MntA).

It is found in the cell membrane. Its function is as follows. Probably part of the ABC transporter complex MntABCD involved in manganese import. Probably responsible for the translocation of the substrate across the membrane. The protein is Manganese transport system membrane protein MntD of Bacillus subtilis (strain 168).